Here is a 208-residue protein sequence, read N- to C-terminus: dTTP/UTP pyrophosphatase (208 aa).

Residue D79 is the Proton acceptor of the active site.

Belongs to the Maf family. YhdE subfamily. It depends on a divalent metal cation as a cofactor.

The protein resides in the cytoplasm. It catalyses the reaction dTTP + H2O = dTMP + diphosphate + H(+). The catalysed reaction is UTP + H2O = UMP + diphosphate + H(+). Nucleoside triphosphate pyrophosphatase that hydrolyzes dTTP and UTP. May have a dual role in cell division arrest and in preventing the incorporation of modified nucleotides into cellular nucleic acids. The protein is dTTP/UTP pyrophosphatase of Mesorhizobium japonicum (strain LMG 29417 / CECT 9101 / MAFF 303099) (Mesorhizobium loti (strain MAFF 303099)).